The following is a 448-amino-acid chain: 26S proteasome regulatory subunit 4 homolog (448 aa).

Over residues 1–16 the composition is skewed to gly residues; it reads MGQGTPGGMGKQGGAP. 2 disordered regions span residues 1-56 and 93-112; these read MGQG…AAAR and LRPTEDKTEEDRSKVDDLRG. Basic and acidic residues-rich tracts occupy residues 17–33 and 93–111; these read GDRKPGGDGDKKDRKFE and LRPTEDKTEEDRSKVDDLR. Position 234-241 (234-241) interacts with ATP; the sequence is GEPGTGKT.

Belongs to the AAA ATPase family.

Its subcellular location is the cytoplasm. It localises to the nucleus. In terms of biological role, the 26S proteasome is involved in the ATP-dependent degradation of ubiquitinated proteins. The regulatory (or ATPase) complex confers ATP dependency and substrate specificity to the 26S complex. This chain is 26S proteasome regulatory subunit 4 homolog (TBP2), found in Oryza sativa subsp. japonica (Rice).